A 265-amino-acid polypeptide reads, in one-letter code: uncharacterized protein (265 aa).

A helical; Signal-anchor for type II membrane protein membrane pass occupies residues 3 to 23; it reads KKTWVYIIIAIIIILLLVWYF. 2 N-linked (GlcNAc...) asparagine; by host glycosylation sites follow: N37 and N125. Positions 37-94 form a coiled coil; that stretch reads NQTYNMLQQQISSLNQQILFLKQQISNLHVPAPTSTVNSLRQTVSDINQQVSTINNQI. Residues 158–257 are a coiled coil; sequence NVADNELNVL…KNSLGSAVRN (100 aa).

It localises to the host membrane. Its subcellular location is the virion. This is an uncharacterized protein from Acanthamoeba polyphaga (Amoeba).